A 415-amino-acid chain; its full sequence is Mulatexin (415 aa).

The first 21 residues, 1–21 (MKFRTLLIIFSLVFLLEIVSA), serve as a signal peptide directing secretion. A Chitin-binding type-1 1 domain is found at 23–66 (EPQCGRDAGGALCHGNLCCSHWGFCGTTAIYCDVDQGCQSQCWS). Intrachain disulfides connect C26/C41, C35/C47, C40/C54, and C60/C64. A disordered region spans residues 65-127 (WSSPPPPSPP…PGGPERPDHR (63 aa)). Residues 67 to 121 (SPPPPSPPPPPPSPPPPSPPPPSPPPPSPPPPSPPPPSPPPPSPPPPSPPPPGGP) show a composition bias toward pro residues. Positions 125 to 167 (DHRCGRALGNPPCNPGRCCSIHNWCGSTAAYCRGSSCQYQCWN) constitute a Chitin-binding type-1 2 domain. 4 disulfides stabilise this stretch: C128/C143, C137/C149, C142/C156, and C161/C165. An N-linked (GlcNAc...) asparagine glycan is attached at N264.

In terms of processing, glycosylated.

The protein resides in the secreted. Its function is as follows. Chitin-binding protein which slows larval growth when consumed by the lepidopteran species S.ricini and M.brassica, but not when consumed by the mulberry specialist B.mori. Lacks chitinase activity. The chain is Mulatexin from Morus alba (White mulberry).